The sequence spans 1229 residues: Phosphorylase b kinase regulatory subunit alpha, liver isoform (1229 aa).

The segment covering 625 to 646 has biased composition (acidic residues); that stretch reads DSLLEDDEEQEEEEEDKFEDDY. The segment at 625 to 648 is disordered; sequence DSLLEDDEEQEEEEEDKFEDDYNN. Positions 825–855 are calmodulin-binding; that stretch reads LEELYIQAGACKEWGLIRYISGILRKRVEVL. The disordered stretch occupies residues 1024 to 1050; the sequence is EIKQRCSSPSTPSGILSPVGPGPADGQ. Polar residues predominate over residues 1028–1037; the sequence is RCSSPSTPSG. The interval 1052 to 1092 is calmodulin-binding; sequence HWVERQGQWLRRRRLDGAINRVPVGFYQKVWKILQKCHGLS. Residue Cys-1226 is the site of S-farnesyl cysteine attachment.

It belongs to the phosphorylase b kinase regulatory chain family. Polymer of 16 chains, four each of alpha, beta, gamma, and delta. Alpha and beta are regulatory chains, gamma is the catalytic chain, and delta is calmodulin. In terms of processing, although the final Cys may be farnesylated, the terminal tripeptide is probably not removed, and the C-terminus is not methylated.

It localises to the cell membrane. Its pathway is glycan biosynthesis; glycogen metabolism. By phosphorylation of various serine residues and by calcium. Its function is as follows. Phosphorylase b kinase catalyzes the phosphorylation of serine in certain substrates, including troponin I. The alpha chain may bind calmodulin. The protein is Phosphorylase b kinase regulatory subunit alpha, liver isoform (phka2) of Takifugu rubripes (Japanese pufferfish).